Reading from the N-terminus, the 648-residue chain is Putative potassium transport protein DDB_G0292412 (648 aa).

A helical membrane pass occupies residues 48–68 (LFLLVILVQLGSTVLLTLPIV). N-linked (GlcNAc...) asparagine glycosylation is present at Asn-81. 2 disordered regions span residues 106 to 145 (HDFKDDDDENDNNNNEENDDNDDESYQHNNNNNEEHDDND) and 223 to 261 (QQQQQPSTTTTTTTTTNSTLNKSTNNSTNNNNNTNDSQS). Residues 110–129 (DDDDENDNNNNEENDDNDDE) are compositionally biased toward acidic residues. Positions 199–227 (IIQQQQQQQQQQQQQQQQQQQQQQQQQQQ) form a coiled coil. Asn-239, Asn-243, Asn-247, Asn-248, Asn-254, and Asn-257 each carry an N-linked (GlcNAc...) asparagine glycan. 6 helical membrane-spanning segments follow: residues 313–333 (LLVIIPCYIITIYILGFISIG), 353–373 (GWWWSLFHTFSAFNNAGLALF), 385–405 (FLLITLSILIFLGNTLFPVFL), 443–463 (VQLFVIWCIFNVSQIALMALL), 472–491 (NMNYGTILLNYYFSSISTRT), and 505–525 (SVLLLFVGLMFVSSYPFIISL). A glycan (N-linked (GlcNAc...) asparagine) is linked at Asn-536. A run of 3 helical transmembrane segments spans residues 550–570 (IFVPYICILFIAIFESQLLES), 571–591 (GVITVFQILFEAISAFGNVGL), and 592–612 (SISITLSTYSKLVFIALMLAG).

The protein belongs to the TrkH potassium transport family.

Its subcellular location is the membrane. May function as a potassium transporter. This Dictyostelium discoideum (Social amoeba) protein is Putative potassium transport protein DDB_G0292412.